We begin with the raw amino-acid sequence, 121 residues long: Large ribosomal subunit protein uL14 (121 aa).

The protein belongs to the universal ribosomal protein uL14 family. In terms of assembly, part of the 50S ribosomal subunit. Forms a cluster with proteins L3 and L19. In the 70S ribosome, L14 and L19 interact and together make contacts with the 16S rRNA in bridges B5 and B8.

Functionally, binds to 23S rRNA. Forms part of two intersubunit bridges in the 70S ribosome. The protein is Large ribosomal subunit protein uL14 of Prochlorococcus marinus (strain SARG / CCMP1375 / SS120).